Here is a 413-residue protein sequence, read N- to C-terminus: 3-isopropylmalate dehydratase large subunit (413 aa).

3 residues coordinate [4Fe-4S] cluster: cysteine 293, cysteine 353, and cysteine 356.

The protein belongs to the aconitase/IPM isomerase family. LeuC type 2 subfamily. Heterodimer of LeuC and LeuD. [4Fe-4S] cluster serves as cofactor.

It carries out the reaction (2R,3S)-3-isopropylmalate = (2S)-2-isopropylmalate. It functions in the pathway amino-acid biosynthesis; L-leucine biosynthesis; L-leucine from 3-methyl-2-oxobutanoate: step 2/4. Functionally, catalyzes the isomerization between 2-isopropylmalate and 3-isopropylmalate, via the formation of 2-isopropylmaleate. This is 3-isopropylmalate dehydratase large subunit from Picrophilus torridus (strain ATCC 700027 / DSM 9790 / JCM 10055 / NBRC 100828 / KAW 2/3).